The following is a 135-amino-acid chain: GADEMCPPGWSSNGVYCYMLFKEPKTWDEAEKFCNKQGKDGHLLSIESKKEEILVDIVVSENIGKMYKIWTGLSERSKEQHCSSRWSDGSFFRSYEIAIRYSECFVLEKQSVFRTWVATPCENTFPFMCKYPVPR.

The N-terminal stretch at 1–4 (GADE) is a signal peptide. 3 disulfide bridges follow: cysteine 6–cysteine 17, cysteine 34–cysteine 129, and cysteine 104–cysteine 121. The C-type lectin domain occupies 13–130 (NGVYCYMLFK…CENTFPFMCK (118 aa)).

It belongs to the snaclec family. As to quaternary structure, heterodimer of subunits alpha and beta; disulfide-linked. Expressed by the venom gland.

It is found in the secreted. Its function is as follows. Binding of echicetin to GPIbalpha (GP1BA) receptor on platelets alone results in inhibition of platelet aggregation, while binding to both GP1BA receptor and IgMk promotes platelet aggregation and signal transduction. The chain is Snaclec echicetin subunit alpha from Echis carinatus (Saw-scaled viper).